The sequence spans 234 residues: Large ribosomal subunit protein uL1 (234 aa).

This sequence belongs to the universal ribosomal protein uL1 family. Part of the 50S ribosomal subunit.

Functionally, binds directly to 23S rRNA. The L1 stalk is quite mobile in the ribosome, and is involved in E site tRNA release. In terms of biological role, protein L1 is also a translational repressor protein, it controls the translation of the L11 operon by binding to its mRNA. This Geobacter metallireducens (strain ATCC 53774 / DSM 7210 / GS-15) protein is Large ribosomal subunit protein uL1.